Consider the following 325-residue polypeptide: BTB/POZ domain-containing protein KCTD12 (325 aa).

Residues 1–28 (MALADSTRGLPNGGGGGGGSGSSSSSAE) form a disordered region. The residue at position 2 (Ala2) is an N-acetylalanine. The span at 11-21 (PNGGGGGGGSG) shows a compositional bias: gly residues. A Phosphotyrosine modification is found at Tyr119. The interval 129–202 (LGAPQQPGPG…PLLTPSQSLD (74 aa)) is disordered. Ser151, Ser171, and Ser185 each carry phosphoserine. Position 196 is a phosphothreonine (Thr196). Phosphoserine is present on Ser200.

As to quaternary structure, interacts as a tetramer with GABBR1 and GABBR2. Present in a variety of fetal organs, with highest expression levels in the cochlea and brain and, in stark contrast, is detected only at extremely low levels in adult organs, such as brain and lung.

Its subcellular location is the presynaptic cell membrane. It is found in the postsynaptic cell membrane. Functionally, auxiliary subunit of GABA-B receptors that determine the pharmacology and kinetics of the receptor response. Increases agonist potency and markedly alter the G-protein signaling of the receptors by accelerating onset and promoting desensitization. This Homo sapiens (Human) protein is BTB/POZ domain-containing protein KCTD12 (KCTD12).